We begin with the raw amino-acid sequence, 573 residues long: Splicing factor U2af large subunit A (573 aa).

Residues 1–175 (MSEFEDHEGN…KSKQRVSGFD (175 aa)) form a disordered region. Positions 22–93 (NGGRDGEIED…ERSRDKDRDH (72 aa)) are enriched in basic and acidic residues. Residues 94 to 105 (RERHHRSSRHRD) are compositionally biased toward basic residues. Positions 106-141 (HSRERGERRERGGRDDDDYRRSRDRDHDRRRDDRGG) are enriched in basic and acidic residues. The segment covering 159 to 169 (TRSRSPSKSKQ) has biased composition (basic residues). 3 RRM domains span residues 239–322 (RRVY…RPSD), 359–437 (DRIF…RANQ), and 478–564 (QVVT…YPED).

The protein belongs to the splicing factor SR family. Component of the spliceosome. Interacts with SUA. Interacts with SF1 in the nucleus.

It localises to the nucleus. In terms of biological role, necessary for the splicing of pre-mRNA. The chain is Splicing factor U2af large subunit A from Arabidopsis thaliana (Mouse-ear cress).